A 297-amino-acid polypeptide reads, in one-letter code: 4-hydroxy-tetrahydrodipicolinate synthase (297 aa).

Thr49 contributes to the pyruvate binding site. The active-site Proton donor/acceptor is Tyr137. Lys166 functions as the Schiff-base intermediate with substrate in the catalytic mechanism. Ile208 provides a ligand contact to pyruvate.

Belongs to the DapA family. In terms of assembly, homotetramer; dimer of dimers.

Its subcellular location is the cytoplasm. It catalyses the reaction L-aspartate 4-semialdehyde + pyruvate = (2S,4S)-4-hydroxy-2,3,4,5-tetrahydrodipicolinate + H2O + H(+). The protein operates within amino-acid biosynthesis; L-lysine biosynthesis via DAP pathway; (S)-tetrahydrodipicolinate from L-aspartate: step 3/4. In terms of biological role, catalyzes the condensation of (S)-aspartate-beta-semialdehyde [(S)-ASA] and pyruvate to 4-hydroxy-tetrahydrodipicolinate (HTPA). The protein is 4-hydroxy-tetrahydrodipicolinate synthase of Porphyromonas gingivalis (strain ATCC 33277 / DSM 20709 / CIP 103683 / JCM 12257 / NCTC 11834 / 2561).